We begin with the raw amino-acid sequence, 402 residues long: uncharacterized protein (402 aa).

12 consecutive transmembrane segments (helical) span residues 11–31, 48–68, 80–100, 108–125, 140–160, 167–187, 219–239, 254–274, 286–306, 308–328, 347–367, and 373–393; these read LALA…IDMY, LVQL…LIVG, LLIC…SPNI, FLQG…RAIV, LLMV…GAIL, WHTI…LIAL, FMGY…YVSG, VFSI…FIIG, LRIA…MTMI, GPLA…GMVL, SALL…LVGI, and VPMG…FFGL.

The protein belongs to the major facilitator superfamily. Bcr/CmlA family.

It is found in the cell membrane. This is an uncharacterized protein from Bacillus subtilis (strain 168).